Here is a 399-residue protein sequence, read N- to C-terminus: 4-hydroxy-3-methylbut-2-enyl diphosphate reductase (399 aa).

Cys66 lines the [4Fe-4S] cluster pocket. Position 96 (His96) interacts with (2E)-4-hydroxy-3-methylbut-2-enyl diphosphate. His96 serves as a coordination point for dimethylallyl diphosphate. His96 lines the isopentenyl diphosphate pocket. Cys157 serves as a coordination point for [4Fe-4S] cluster. A (2E)-4-hydroxy-3-methylbut-2-enyl diphosphate-binding site is contributed by His185. His185 contributes to the dimethylallyl diphosphate binding site. Residue His185 coordinates isopentenyl diphosphate. Residue Glu187 is the Proton donor of the active site. Residue Thr250 coordinates (2E)-4-hydroxy-3-methylbut-2-enyl diphosphate. Cys288 provides a ligand contact to [4Fe-4S] cluster. The (2E)-4-hydroxy-3-methylbut-2-enyl diphosphate site is built by Ser317, Ser318, Asn319, and Ser379. Residues Ser317, Ser318, Asn319, and Ser379 each contribute to the dimethylallyl diphosphate site. 4 residues coordinate isopentenyl diphosphate: Ser317, Ser318, Asn319, and Ser379.

Belongs to the IspH family. It depends on [4Fe-4S] cluster as a cofactor.

It carries out the reaction isopentenyl diphosphate + 2 oxidized [2Fe-2S]-[ferredoxin] + H2O = (2E)-4-hydroxy-3-methylbut-2-enyl diphosphate + 2 reduced [2Fe-2S]-[ferredoxin] + 2 H(+). The catalysed reaction is dimethylallyl diphosphate + 2 oxidized [2Fe-2S]-[ferredoxin] + H2O = (2E)-4-hydroxy-3-methylbut-2-enyl diphosphate + 2 reduced [2Fe-2S]-[ferredoxin] + 2 H(+). The protein operates within isoprenoid biosynthesis; dimethylallyl diphosphate biosynthesis; dimethylallyl diphosphate from (2E)-4-hydroxy-3-methylbutenyl diphosphate: step 1/1. It functions in the pathway isoprenoid biosynthesis; isopentenyl diphosphate biosynthesis via DXP pathway; isopentenyl diphosphate from 1-deoxy-D-xylulose 5-phosphate: step 6/6. In terms of biological role, catalyzes the conversion of 1-hydroxy-2-methyl-2-(E)-butenyl 4-diphosphate (HMBPP) into a mixture of isopentenyl diphosphate (IPP) and dimethylallyl diphosphate (DMAPP). Acts in the terminal step of the DOXP/MEP pathway for isoprenoid precursor biosynthesis. This Synechococcus sp. (strain WH7803) protein is 4-hydroxy-3-methylbut-2-enyl diphosphate reductase.